A 509-amino-acid polypeptide reads, in one-letter code: MGKLAVAAITSLWVIPMSIIVNHIVPEPYMDEIFHVPQAQQYCNGNFRSWDPMITTPPGLYYLSLAHVASLFPGMLLMENTSQSFSEACSTSVLRSTNAVSAVLCGVLVYEIIRFLGPNLSDRKATFMALVMSLYPLHWFFTFLYYTDVASLTAVLAMYLTCLKRRYVLSALFGTLAVFIRQTNVVWMLFVACSGILDFTLDSSKQKGKQEVNQELHQSSNKKGATLRSNLRKRKSDISSDTSDPFNHGQTVPSTEDTSDLVYDIYTVISTSWNLKWRILIKFSPFIFVVVAFGIFILWNGGIVLGAKEAHVVSLHFAQIMYFSLVSALFTAPLHFSVNQLRHQFHQLHRNWSLSLILTLVALVAGFVSVHFFSLAHPYLLADNRHYPFYLWRKIINAHWLMKYILVPVYVYSWFSILTLLAKTRRQTWILVYFLATCGVLVPTPLIEFRYYTIPFYLFMLHSCVRSSSFATWLLIGTIFVSINVFTMAMFLFRPFKWSHEDGVQRFIW.

At 1–4 (MGKL) the chain is on the cytoplasmic side. Residues 5–25 (AVAAITSLWVIPMSIIVNHIV) form a helical membrane-spanning segment. Topologically, residues 26-57 (PEPYMDEIFHVPQAQQYCNGNFRSWDPMITTP) are lumenal. The helical transmembrane segment at 58-78 (PGLYYLSLAHVASLFPGMLLM) threads the bilayer. Topologically, residues 79–99 (ENTSQSFSEACSTSVLRSTNA) are cytoplasmic. The chain crosses the membrane as a helical span at residues 100-120 (VSAVLCGVLVYEIIRFLGPNL). Residues 121-124 (SDRK) are Lumenal-facing. Residues 125–145 (ATFMALVMSLYPLHWFFTFLY) traverse the membrane as a helical segment. Residues 146–170 (YTDVASLTAVLAMYLTCLKRRYVLS) are Cytoplasmic-facing. The helical transmembrane segment at 171 to 191 (ALFGTLAVFIRQTNVVWMLFV) threads the bilayer. The Lumenal segment spans residues 192 to 285 (ACSGILDFTL…KWRILIKFSP (94 aa)). The interval 210–254 (QEVNQELHQSSNKKGATLRSNLRKRKSDISSDTSDPFNHGQTVPS) is disordered. Polar residues-rich tracts occupy residues 215–229 (ELHQ…TLRS) and 239–254 (SSDT…TVPS). A helical membrane pass occupies residues 286–306 (FIFVVVAFGIFILWNGGIVLG). Over 307–311 (AKEAH) the chain is Cytoplasmic. A helical membrane pass occupies residues 312 to 332 (VVSLHFAQIMYFSLVSALFTA). Over 333 to 355 (PLHFSVNQLRHQFHQLHRNWSLS) the chain is Lumenal. Asparagine 351 carries N-linked (GlcNAc...) asparagine glycosylation. Residues 356–376 (LILTLVALVAGFVSVHFFSLA) traverse the membrane as a helical segment. Topologically, residues 377–400 (HPYLLADNRHYPFYLWRKIINAHW) are cytoplasmic. The chain crosses the membrane as a helical span at residues 401 to 421 (LMKYILVPVYVYSWFSILTLL). Over 422-428 (AKTRRQT) the chain is Lumenal. The chain crosses the membrane as a helical span at residues 429–449 (WILVYFLATCGVLVPTPLIEF). Topologically, residues 450–472 (RYYTIPFYLFMLHSCVRSSSFAT) are cytoplasmic. A helical transmembrane segment spans residues 473–493 (WLLIGTIFVSINVFTMAMFLF). The Lumenal segment spans residues 494 to 509 (RPFKWSHEDGVQRFIW).

Belongs to the ALG10 glucosyltransferase family.

The protein localises to the endoplasmic reticulum membrane. It carries out the reaction an alpha-D-Glc-(1-&gt;3)-alpha-D-Glc-(1-&gt;3)-alpha-D-Man-(1-&gt;2)-alpha-D-Man-(1-&gt;2)-alpha-D-Man-(1-&gt;3)-[alpha-D-Man-(1-&gt;2)-alpha-D-Man-(1-&gt;3)-[alpha-D-Man-(1-&gt;2)-alpha-D-Man-(1-&gt;6)]-alpha-D-Man-(1-&gt;6)]-beta-D-Man-(1-&gt;4)-beta-D-GlcNAc-(1-&gt;4)-alpha-D-GlcNAc-diphospho-di-trans,poly-cis-dolichol + a di-trans,poly-cis-dolichyl beta-D-glucosyl phosphate = a alpha-D-Glc-(1-&gt;2)-alpha-D-Glc-(1-&gt;3)-alpha-D-Glc-(1-&gt;3)-alpha-D-Man-(1-&gt;2)-alpha-D-Man-(1-&gt;2)-alpha-D-Man-(1-&gt;3)-[alpha-D-Man-(1-&gt;2)-alpha-D-Man-(1-&gt;3)-[alpha-D-Man-(1-&gt;2)-alpha-D-Man-(1-&gt;6)]-alpha-D-Man-(1-&gt;6)]-beta-D-Man-(1-&gt;4)-beta-D-GlcNAc-(1-&gt;4)-alpha-D-GlcNAc-diphospho-di-trans,poly-cis-dolichol + a di-trans,poly-cis-dolichyl phosphate + H(+). It participates in protein modification; protein glycosylation. Dol-P-Glc:Glc(2)Man(9)GlcNAc(2)-PP-Dol alpha-1,2-glucosyltransferase that operates in the biosynthetic pathway of dolichol-linked oligosaccharides, the glycan precursors employed in protein asparagine (N)-glycosylation. The assembly of dolichol-linked oligosaccharides begins on the cytosolic side of the endoplasmic reticulum membrane and finishes in its lumen. The sequential addition of sugars to dolichol pyrophosphate produces dolichol-linked oligosaccharides containing fourteen sugars, including two GlcNAcs, nine mannoses and three glucoses. Once assembled, the oligosaccharide is transferred from the lipid to nascent proteins by oligosaccharyltransferases. In the lumen of the endoplasmic reticulum, adds the third and last glucose residue from dolichyl phosphate glucose (Dol-P-Glc) onto the lipid-linked oligosaccharide intermediate Glc(2)Man(9)GlcNAc(2)-PP-Dol to produce Glc(3)Man(9)GlcNAc(2)-PP-Dol. The protein is Dol-P-Glc:Glc(2)Man(9)GlcNAc(2)-PP-Dol alpha-1,2-glucosyltransferase of Arabidopsis thaliana (Mouse-ear cress).